The following is a 253-amino-acid chain: Phosphoglycerate mutase 2 (253 aa).

The residue at position 3 (Thr3) is a Phosphothreonine. Substrate contacts are provided by residues 10 to 17 (RHGESTWN), 23 to 24 (CG), Arg62, 89 to 92 (ERHY), Lys100, and 116 to 117 (RR). His11 serves as the catalytic Tele-phosphohistidine intermediate. At Ser14 the chain carries Phosphoserine. The Proton donor/acceptor role is filled by Glu89. The residue at position 118 (Ser118) is a Phosphoserine. Residues Tyr132 and Tyr133 each carry the phosphotyrosine modification. Ser135 carries the phosphoserine modification. Position 152 is a phosphothreonine (Thr152). 187-188 (GN) contacts substrate.

This sequence belongs to the phosphoglycerate mutase family. BPG-dependent PGAM subfamily. In terms of assembly, homodimer.

It catalyses the reaction (2R)-2-phosphoglycerate = (2R)-3-phosphoglycerate. The catalysed reaction is (2R)-3-phospho-glyceroyl phosphate = (2R)-2,3-bisphosphoglycerate + H(+). Interconversion of 3- and 2-phosphoglycerate with 2,3-bisphosphoglycerate as the primer of the reaction. Can also catalyze the reaction of EC 5.4.2.4 (synthase), but with a reduced activity. This is Phosphoglycerate mutase 2 (PGAM2) from Bos taurus (Bovine).